A 456-amino-acid polypeptide reads, in one-letter code: Iroquois-class homeodomain protein irx-2 (456 aa).

The segment at residues 110–172 (DPAYRKNATR…NARRRLKKEN (63 aa)) is a DNA-binding region (homeobox; TALE-type). 3 disordered regions span residues 172-214 (NKMT…AEDE), 246-320 (CESG…PASK), and 434-456 (RPTN…QPYP). Composition is skewed to basic and acidic residues over residues 192–205 (GERV…KAQD) and 246–256 (CESGSESKEKY). Over residues 257-269 (DDDEDEEEGDEED) the composition is skewed to acidic residues. Positions 291 to 318 (NHQQDGSPRNSNKTSLDNGMSPSSQTPA) are enriched in polar residues.

It belongs to the TALE/IRO homeobox family. As to expression, expressed in the neural plate in overlapping patterns with other irx members, which all share an anterior border of expression. Also expressed in the placodes. Broadly expressed in the tailbud rhombencephalon (hindbrain). Outside the nervous system and at tailbud stages, expressed in the developing otic vesicle, branchial arches, prospective heart region and pronephros.

Its subcellular location is the nucleus. Acts partially redundantly with other irx members in neural patterning. Required for formation of the posterior forebrain, midbrain, hindbrain, and to a lesser extent, spinal cord. Acts early in neural plate development to induce expression of some but not all proneural genes, and specify a neural precursor state. Also up-regulates repressors that prevent neuronal differentiation. Patterns the neuroectoderm in both the anterior/posterior and dorsal/ventral axes. Probably dispensable for pronephric kidney development. The chain is Iroquois-class homeodomain protein irx-2 from Xenopus tropicalis (Western clawed frog).